A 300-amino-acid polypeptide reads, in one-letter code: Tyrosine recombinase XerC (300 aa).

The Core-binding (CB) domain maps to 1-86 (MESVLDAFDQ…AVKTFTAWAV (86 aa)). Residues 107–294 (TLPAVLRQDQ…TVARLRAVHD (188 aa)) form the Tyr recombinase domain. Active-site residues include arginine 151, lysine 175, histidine 246, arginine 249, and histidine 272. Residue tyrosine 281 is the O-(3'-phospho-DNA)-tyrosine intermediate of the active site.

Belongs to the 'phage' integrase family. XerC subfamily. In terms of assembly, forms a cyclic heterotetrameric complex composed of two molecules of XerC and two molecules of XerD.

It is found in the cytoplasm. Its function is as follows. Site-specific tyrosine recombinase, which acts by catalyzing the cutting and rejoining of the recombining DNA molecules. The XerC-XerD complex is essential to convert dimers of the bacterial chromosome into monomers to permit their segregation at cell division. It also contributes to the segregational stability of plasmids. The sequence is that of Tyrosine recombinase XerC from Mycobacterium sp. (strain KMS).